A 258-amino-acid chain; its full sequence is Imidazole glycerol phosphate synthase subunit HisF (258 aa).

Catalysis depends on residues Asp12 and Asp131.

This sequence belongs to the HisA/HisF family. Heterodimer of HisH and HisF.

Its subcellular location is the cytoplasm. The catalysed reaction is 5-[(5-phospho-1-deoxy-D-ribulos-1-ylimino)methylamino]-1-(5-phospho-beta-D-ribosyl)imidazole-4-carboxamide + L-glutamine = D-erythro-1-(imidazol-4-yl)glycerol 3-phosphate + 5-amino-1-(5-phospho-beta-D-ribosyl)imidazole-4-carboxamide + L-glutamate + H(+). Its pathway is amino-acid biosynthesis; L-histidine biosynthesis; L-histidine from 5-phospho-alpha-D-ribose 1-diphosphate: step 5/9. In terms of biological role, IGPS catalyzes the conversion of PRFAR and glutamine to IGP, AICAR and glutamate. The HisF subunit catalyzes the cyclization activity that produces IGP and AICAR from PRFAR using the ammonia provided by the HisH subunit. This is Imidazole glycerol phosphate synthase subunit HisF from Paenarthrobacter aurescens (strain TC1).